Reading from the N-terminus, the 599-residue chain is Protein linkin (599 aa).

Positions 1-19 (MKKILPIIWLINLVSGSLS) are cleaved as a signal peptide. At 20–553 (LEKKAPDLLG…SRLYVTPSAL (534 aa)) the chain is on the extracellular side. N-linked (GlcNAc...) asparagine glycosylation is found at Asn50, Asn117, Asn163, Asn361, and Asn378. A helical transmembrane segment spans residues 554–574 (IVQSLAVIALVCCMLLMVVVF). Topologically, residues 575–599 (LHYREKKEDRYERQQQSHRFHFDAM) are cytoplasmic.

It belongs to the TIP family. In terms of tissue distribution, expressed in all somatic gonadal cells including distal tip cells, anchor cell, uterine precursor cells and spermatheca precursor cells of the hermaphrodite. Also expressed in the pharynx, pharyngeal-intestinal valve, intestine, excretory cell and canal, seam cells, a subset of hypodermal cells, vulval precursor cells of the hermaphrodite and hook precursor cells in the male.

The protein resides in the apical cell membrane. It localises to the lateral cell membrane. Probable cell adhesion protein involved in gonadal cell migration. This chain is Protein linkin, found in Caenorhabditis elegans.